The chain runs to 1578 residues: Cilia- and flagella-associated protein 74 (1578 aa).

Acidic residues predominate over residues 1–14 (MEEPTVQFSDEDLV). 2 disordered regions span residues 1-21 (MEEP…PPMD) and 33-67 (EVER…TTKD). A compositionally biased stretch (basic and acidic residues) spans 33–65 (EVERPSEGLEDEGSHSSAKKESKGAEKMRKSTT). Coiled coils occupy residues 103–156 (RQRM…QSKI) and 330–378 (KYLF…RRQH).

The protein belongs to the CFAP74 family.

It is found in the cytoplasm. Its subcellular location is the cytoskeleton. It localises to the cilium axoneme. The protein localises to the flagellum axoneme. In terms of biological role, as part of the central apparatus of the cilium axoneme may play a role in cilium movement. May play an important role in sperm architecture and function. The polypeptide is Cilia- and flagella-associated protein 74 (Mus musculus (Mouse)).